The chain runs to 947 residues: Protein NETWORKED 2A (947 aa).

In terms of domain architecture, NAB spans 10 to 90; that stretch reads YSWWWASHIR…ERYDHLSREL (81 aa). Residues 105-131 form a disordered region; that stretch reads VQFPLEDDSDENEDYDGRPRKPPKHLH. Residues 109–118 show a composition bias toward acidic residues; it reads LEDDSDENED. Coiled-coil stretches lie at residues 348-454 and 568-619; these read KLAE…IQDV and VLRD…QKLD. 2 stretches are compositionally biased toward basic and acidic residues: residues 618-627 and 635-644; these read LDTTGKDSPH and LEHEQGHHET. Disordered regions lie at residues 618 to 675, 743 to 763, and 911 to 947; these read LDTT…RTKS, RIES…AVAS, and KNRQ…KLPE. Over residues 645–660 the composition is skewed to polar residues; it reads VSISPTSNFSVATTPH. A compositionally biased stretch (basic and acidic residues) spans 662–675; that stretch reads QVGDVKRTPGRTKS. Residues 722 to 809 are a coiled coil; the sequence is VHQIQKYQTT…LANIQEEIAR (88 aa). Composition is skewed to polar residues over residues 749–761 and 915–927; these read QQES…NTAV and QKQS…SCVS.

Belongs to the NET family. As to expression, expressed specifically in pollen.

It localises to the cell membrane. Its function is as follows. Plant-specific actin binding protein. Associates with F-actin at the plasma membrane in growing pollen tubes. May be part of a membrane-cytoskeletal adapter complex. The polypeptide is Protein NETWORKED 2A (Arabidopsis thaliana (Mouse-ear cress)).